The following is a 421-amino-acid chain: GTPase Obg (421 aa).

An Obg domain is found at 1 to 158 (MYFIDEAINE…FKIKTELKIL (158 aa)). An OBG-type G domain is found at 159-324 (ADVGLIGYPS…LKYKMLEMIK (166 aa)). Residues 165–172 (GYPSVGKS), 190–194 (FTTLK), 211–214 (DLPG), 278–281 (NKMD), and 305–307 (SLL) each bind GTP. Residues S172 and T192 each contribute to the Mg(2+) site. One can recognise an OCT domain in the interval 342–421 (TLEEEKPDFV…ICDRVFEFIT (80 aa)).

Belongs to the TRAFAC class OBG-HflX-like GTPase superfamily. OBG GTPase family. As to quaternary structure, monomer. Mg(2+) is required as a cofactor.

It is found in the cytoplasm. In terms of biological role, an essential GTPase which binds GTP, GDP and possibly (p)ppGpp with moderate affinity, with high nucleotide exchange rates and a fairly low GTP hydrolysis rate. Plays a role in control of the cell cycle, stress response, ribosome biogenesis and in those bacteria that undergo differentiation, in morphogenesis control. In Phytoplasma mali (strain AT), this protein is GTPase Obg.